A 474-amino-acid polypeptide reads, in one-letter code: Microtubule protein alp7 (474 aa).

Positions 1–20 (MSDIVSSSTDYSRRSPSSSS) are enriched in low complexity. Disordered stretches follow at residues 1-79 (MSDI…DTLN), 93-114 (KSFDFSGTPRPMHPISHPLSQH), and 164-223 (SLQT…NSTQ). Residue Ser17 is modified to Phosphoserine. Positions 25-36 (ETDHTGFHEKRQ) are enriched in basic and acidic residues. Polar residues predominate over residues 66-76 (SKPNPQLNLKD). 2 stretches are compositionally biased toward polar residues: residues 177–189 (SNGSFPRQTNTAP) and 201–223 (RNSATPSTSQADIPTQYPINSTQ). 2 coiled-coil regions span residues 219–273 (INST…QLRS) and 367–471 (KISN…LNLE).

Interacts with alp14.

Its subcellular location is the nucleus. The protein resides in the cytoplasm. The protein localises to the cytoskeleton. It is found in the spindle. It localises to the chromosome. Its subcellular location is the centromere. The protein resides in the kinetochore. Required for bipolar spindle formation and proper chromosome segregation. Has an indirect role in connecting the kinetochores and the plus end of pole to chromosome microtubules by targeting alp14 to the spindle pole body. Involved in the emergence of large microtubule organizing centers (MTOC) in interphase cells. Attaches to the minus ends of microtubules and associates with the sites of microtubule attachment on the nuclear envelope. This leads to the stabilization of the microtubule bundles. The sequence is that of Microtubule protein alp7 (alp7) from Schizosaccharomyces pombe (strain 972 / ATCC 24843) (Fission yeast).